The following is a 473-amino-acid chain: tRNA-2-methylthio-N(6)-dimethylallyladenosine synthase (473 aa).

In terms of domain architecture, MTTase N-terminal spans 5–125 (RKLHIKSYGC…LPQLLARAKA (121 aa)). [4Fe-4S] cluster-binding residues include Cys14, Cys50, Cys88, Cys166, Cys170, and Cys173. Residues 152-384 (RARGISAFVT…QNLIDSQQSA (233 aa)) form the Radical SAM core domain. The TRAM domain maps to 387–449 (RAAVGTTVDV…RYSLLGSLAS (63 aa)). Over residues 453–462 (SRASADDAPP) the composition is skewed to low complexity. Residues 453–473 (SRASADDAPPVGASSPAIMGV) are disordered.

It belongs to the methylthiotransferase family. MiaB subfamily. As to quaternary structure, monomer. [4Fe-4S] cluster is required as a cofactor.

It localises to the cytoplasm. It catalyses the reaction N(6)-dimethylallyladenosine(37) in tRNA + (sulfur carrier)-SH + AH2 + 2 S-adenosyl-L-methionine = 2-methylsulfanyl-N(6)-dimethylallyladenosine(37) in tRNA + (sulfur carrier)-H + 5'-deoxyadenosine + L-methionine + A + S-adenosyl-L-homocysteine + 2 H(+). Catalyzes the methylthiolation of N6-(dimethylallyl)adenosine (i(6)A), leading to the formation of 2-methylthio-N6-(dimethylallyl)adenosine (ms(2)i(6)A) at position 37 in tRNAs that read codons beginning with uridine. The chain is tRNA-2-methylthio-N(6)-dimethylallyladenosine synthase from Nitrobacter hamburgensis (strain DSM 10229 / NCIMB 13809 / X14).